The chain runs to 381 residues: 4-hydroxyphenylpyruvate dioxygenase (381 aa).

2 VOC domains span residues 22-156 (GMDA…LVDR) and 184-338 (AIDH…IFTK). Positions 187, 270, and 349 each coordinate Fe cation.

The protein belongs to the 4HPPD family. Homodimer. The cofactor is Fe cation.

The enzyme catalyses 3-(4-hydroxyphenyl)pyruvate + O2 = homogentisate + CO2. Its pathway is amino-acid degradation; L-phenylalanine degradation; acetoacetate and fumarate from L-phenylalanine: step 3/6. This is 4-hydroxyphenylpyruvate dioxygenase (hpd) from Streptomyces avermitilis (strain ATCC 31267 / DSM 46492 / JCM 5070 / NBRC 14893 / NCIMB 12804 / NRRL 8165 / MA-4680).